The sequence spans 503 residues: Beta-amylase Tri a 17 (503 aa).

Substrate-binding residues include Asp51, His91, and Asp99. The Proton donor role is filled by Glu184. Residues Lys293, His298, and Thr340 each coordinate substrate. The active-site Proton acceptor is Glu378. Substrate contacts are provided by residues 379-380 and Arg418; that span reads NA.

Belongs to the glycosyl hydrolase 14 family.

The enzyme catalyses Hydrolysis of (1-&gt;4)-alpha-D-glucosidic linkages in polysaccharides so as to remove successive maltose units from the non-reducing ends of the chains.. This is Beta-amylase Tri a 17 (BMY1) from Triticum aestivum (Wheat).